Reading from the N-terminus, the 851-residue chain is Putative serine/threonine-protein kinase 019R (851 aa).

5 disordered regions span residues 1 to 24 (MATN…RTIK), 61 to 91 (PRVA…RGGP), 104 to 160 (GGAS…KRGG), 190 to 216 (GLSP…ARRS), and 340 to 400 (SRPS…GEPR). The segment covering 125–141 (ARRQSPAEAAEASPCPE) has biased composition (low complexity). The span at 196 to 216 (SHMRKSPARRSPARRSPARRS) shows a compositional bias: basic residues. The span at 340-366 (SRPSGVSRTSGTSGSSGSSASSRPPNS) shows a compositional bias: low complexity. The 396-residue stretch at 456 to 851 (AVSDNVIGQG…GEREIESFTM (396 aa)) folds into the Protein kinase domain. ATP contacts are provided by residues 462–470 (IGQGSWGSV) and Lys485. The active-site Proton acceptor is the Asp608.

The protein belongs to the protein kinase superfamily. Ser/Thr protein kinase family.

It catalyses the reaction L-seryl-[protein] + ATP = O-phospho-L-seryl-[protein] + ADP + H(+). The enzyme catalyses L-threonyl-[protein] + ATP = O-phospho-L-threonyl-[protein] + ADP + H(+). The chain is Putative serine/threonine-protein kinase 019R from Dryophytes versicolor (chameleon treefrog).